The sequence spans 269 residues: Rhamnulose-1-phosphate aldolase (269 aa).

E119 is an active-site residue. Zn(2+) contacts are provided by H142, H144, and H214.

It belongs to the aldolase class II family. RhaD subfamily. Zn(2+) is required as a cofactor.

It is found in the cytoplasm. It catalyses the reaction L-rhamnulose 1-phosphate = (S)-lactaldehyde + dihydroxyacetone phosphate. The protein operates within carbohydrate degradation; L-rhamnose degradation; glycerone phosphate from L-rhamnose: step 3/3. In terms of biological role, catalyzes the reversible cleavage of L-rhamnulose-1-phosphate to dihydroxyacetone phosphate (DHAP) and L-lactaldehyde. The chain is Rhamnulose-1-phosphate aldolase from Bacteroides thetaiotaomicron (strain ATCC 29148 / DSM 2079 / JCM 5827 / CCUG 10774 / NCTC 10582 / VPI-5482 / E50).